The following is a 642-amino-acid chain: Dihydrolipoyllysine-residue acetyltransferase component of pyruvate dehydrogenase complex, mitochondrial (642 aa).

The N-terminal 85 residues, 1-85 (MWRVCARRAR…LLGSPSRRSY (85 aa)), are a transit peptide targeting the mitochondrion. Residues 80 to 99 (PSRRSYSLPPHQKVPLPSLS) are disordered. Lipoyl-binding domains lie at 90-166 (HQKV…CITV) and 217-293 (HMQI…CIIV). Residue serine 99 is modified to Phosphoserine. Residues lysine 131 and lysine 258 each carry the N6-lipoyllysine modification. The segment at 313–346 (LKPQAAPPAPPPVAAVPPTPQPVAPTPSAAPAGP) is disordered. Residues 317–337 (AAPPAPPPVAAVPPTPQPVAP) are compositionally biased toward pro residues. In terms of domain architecture, Peripheral subunit-binding (PSBD) spans 351 to 388 (FVSPLAKKLAAEKGIDLTQVKGTGPEGRIIKKDIDSFV). Arginine 456 lines the CoA pocket. An N6-acetyllysine modification is found at lysine 461. Lysine 468 carries the post-translational modification N6-succinyllysine. Serine 470 provides a ligand contact to CoA. The residue at position 542 (lysine 542) is an N6-succinyllysine. The CoA site is built by serine 561, asparagine 562, and glycine 586. Active-site residues include histidine 615 and aspartate 619.

It belongs to the 2-oxoacid dehydrogenase family. As to quaternary structure, part of the pyruvate dehydrogenase complex (PDHc) that is a multi-enzyme complex composed of multiple copies of three enzymes, pyruvate dehydrogenase (subunits PDH1A and PDHB, E1 component), dihydrolipoamide acetyltransferase (DLAT, E2 component), and dihydrolipoamide dehydrogenase (DLD, E3 component) to which is added an additional protein the E3-binding protein (PDHX, E3BP). In terms of structural architecture, the E2 and E3BP components assemble into a 60meric central core with icosahedral symmetry. The central core is decorated with E1 and E3 proteins. Currently, two alternative models for the E2:E3BP stoichiometry are considered as being either 48:12 (E2(48)-E3BP(12)) or 40:20 (E2(40)-E3BP(20)). Interacts with PDK2 and PDK3. Interacts with SIRT4. Interacts with PDHB. (R)-lipoate serves as cofactor. Delipoylated at Lys-131 and Lys-258 by SIRT4, delipoylation decreases the PHD complex activity.

It localises to the mitochondrion matrix. It catalyses the reaction N(6)-[(R)-dihydrolipoyl]-L-lysyl-[protein] + acetyl-CoA = N(6)-[(R)-S(8)-acetyldihydrolipoyl]-L-lysyl-[protein] + CoA. In terms of biological role, as part of the pyruvate dehydrogenase complex, catalyzes the transfers of an acetyl group to a lipoic acid moiety. The pyruvate dehydrogenase complex, catalyzes the overall conversion of pyruvate to acetyl-CoA and CO(2), and thereby links cytoplasmic glycolysis and the mitochondrial tricarboxylic acid (TCA) cycle. The sequence is that of Dihydrolipoyllysine-residue acetyltransferase component of pyruvate dehydrogenase complex, mitochondrial from Mus musculus (Mouse).